The sequence spans 429 residues: C4-dicarboxylate transport protein (429 aa).

8 consecutive transmembrane segments (helical) span residues 9–29 (VLYVQVIFAIIVGVILGHYYP), 45–65 (LIKMVIGPIIFCTVVTGIAGM), 79–99 (LLYFEIVSTFALLLGLAATHI), 149–169 (GEILQILLIALLFGSVLAHLG), 185–205 (VLFGIVHIVTKLAPIGAFGAM), 223–243 (LIGTFYLTSVVFVLVVLGTIA), 308–328 (IYMTMAVLFIAQATNIELTWM), and 356–376 (AATLAVVPTIPLSGMVLILGI).

It belongs to the dicarboxylate/amino acid:cation symporter (DAACS) (TC 2.A.23) family.

It localises to the cell inner membrane. Responsible for the transport of dicarboxylates such as succinate, fumarate, and malate from the periplasm across the membrane. The sequence is that of C4-dicarboxylate transport protein from Burkholderia lata (strain ATCC 17760 / DSM 23089 / LMG 22485 / NCIMB 9086 / R18194 / 383).